The chain runs to 284 residues: L-ribulose-5-phosphate 3-epimerase UlaE (284 aa).

Belongs to the L-ribulose-5-phosphate 3-epimerase family.

The enzyme catalyses L-ribulose 5-phosphate = L-xylulose 5-phosphate. It functions in the pathway cofactor degradation; L-ascorbate degradation; D-xylulose 5-phosphate from L-ascorbate: step 3/4. In terms of biological role, catalyzes the isomerization of L-xylulose-5-phosphate to L-ribulose-5-phosphate. Is involved in the anaerobic L-ascorbate utilization. This chain is L-ribulose-5-phosphate 3-epimerase UlaE, found in Salmonella heidelberg (strain SL476).